A 152-amino-acid polypeptide reads, in one-letter code: D-aminoacyl-tRNA deacylase 1 (152 aa).

A Gly-cisPro motif, important for rejection of L-amino acids motif is present at residues 140-141 (GP).

It belongs to the DTD family. Homodimer.

The protein resides in the cytoplasm. It carries out the reaction glycyl-tRNA(Ala) + H2O = tRNA(Ala) + glycine + H(+). It catalyses the reaction a D-aminoacyl-tRNA + H2O = a tRNA + a D-alpha-amino acid + H(+). Its function is as follows. An aminoacyl-tRNA editing enzyme that deacylates mischarged D-aminoacyl-tRNAs. Hydrolyzes correctly charged, achiral, glycyl-tRNA(Gly). Deacylates mischarged D.melanogaster and E.coli glycyl-tRNA(Ala), protecting cells against glycine mischarging by AlaRS. Acts via tRNA-based rather than protein-based catalysis; rejects L-amino acids rather than detecting D-amino acids in the active site. By recycling D-aminoacyl-tRNA to D-amino acids and free tRNA molecules, this enzyme counteracts the toxicity associated with the formation of D-aminoacyl-tRNA entities in vivo and helps enforce protein L-homochirality. This Leishmania major protein is D-aminoacyl-tRNA deacylase 1 (dtd1).